Consider the following 87-residue polypeptide: MALPGERFHVLAQLEHLQSKYTGTAMRHEPSRMDCESAPRHSRLSNVSSRNEHVYCRCGEREPSSNPLQSDKSHDSAVWTASREESS.

Residues 23-87 are disordered; sequence GTAMRHEPSR…VWTASREESS (65 aa). Composition is skewed to basic and acidic residues over residues 26 to 39 and 50 to 63; these read MRHE…ESAP and RNEH…EREP.

The sequence is that of Protein moa-2 from Caenorhabditis elegans.